The sequence spans 946 residues: Rho GTPase-activating protein 4 (946 aa).

Residues 19-317 form the F-BAR domain; that stretch reads TQVKEMRWQL…AVEALDPPGD (299 aa). A coiled-coil region spans residues 128–195; sequence LAQRLSHIAE…REAERQEEKR (68 aa). Residues 187–196 are compositionally biased toward basic and acidic residues; it reads EAERQEEKRA. 2 disordered regions span residues 187–220 and 402–435; these read EAER…SLKK and LDSF…QQQE. Composition is skewed to low complexity over residues 202–211 and 407–419; these read TTTAGATEAG and TSPS…STSS. The Rho-GAP domain occupies 507 to 695; sequence GDMEKFIQSS…TLIVQPDRVF (189 aa). The SH3 domain maps to 746 to 805; that stretch reads EGVVEAVACFAYTGRTAQELSFRRGDVLRLHERASSDWWRGEHNGMRGLIPHKYITLPAG. Phosphoserine occurs at positions 860, 901, and 906. The interval 885–946 is disordered; it reads KTSVRQGLGP…QGLDTTPKPH (62 aa). A compositionally biased stretch (pro residues) spans 901–910; the sequence is SPGPRSPKAP. Positions 924–934 are enriched in low complexity; that stretch reads GPGAPASPSAS.

As to quaternary structure, interacts with NCKAP1L. In terms of tissue distribution, predominantly in hematopoietic cells (spleen, thymus and leukocytes); low levels in placenta, lung and various fetal tissues.

It is found in the cytoplasm. Inhibitory effect on stress fiber organization. May down-regulate Rho-like GTPase in hematopoietic cells. This chain is Rho GTPase-activating protein 4, found in Homo sapiens (Human).